The primary structure comprises 344 residues: Serine/threonine-protein kinase ppk13 (344 aa).

ATP contacts are provided by residues 38–46 (LGEGGFAFV) and Lys61. One can recognise a Protein kinase domain in the interval 76–344 (MKEADYHRKF…LSKIDLQINQ (269 aa)). Residue His192 is the Proton acceptor of the active site.

This sequence belongs to the protein kinase superfamily. Ser/Thr protein kinase family.

It is found in the endoplasmic reticulum. The protein localises to the golgi apparatus. The enzyme catalyses L-seryl-[protein] + ATP = O-phospho-L-seryl-[protein] + ADP + H(+). The catalysed reaction is L-threonyl-[protein] + ATP = O-phospho-L-threonyl-[protein] + ADP + H(+). The chain is Serine/threonine-protein kinase ppk13 (ppk13) from Schizosaccharomyces pombe (strain 972 / ATCC 24843) (Fission yeast).